A 387-amino-acid polypeptide reads, in one-letter code: Methylthioribose-1-phosphate isomerase (387 aa).

The active-site Proton donor is aspartate 257.

Belongs to the eIF-2B alpha/beta/delta subunits family. MtnA subfamily.

The protein localises to the cytoplasm. Its subcellular location is the nucleus. It catalyses the reaction 5-(methylsulfanyl)-alpha-D-ribose 1-phosphate = 5-(methylsulfanyl)-D-ribulose 1-phosphate. It functions in the pathway amino-acid biosynthesis; L-methionine biosynthesis via salvage pathway; L-methionine from S-methyl-5-thio-alpha-D-ribose 1-phosphate: step 1/6. Its function is as follows. Catalyzes the interconversion of methylthioribose-1-phosphate (MTR-1-P) into methylthioribulose-1-phosphate (MTRu-1-P). In Aspergillus fumigatus (strain CBS 144.89 / FGSC A1163 / CEA10) (Neosartorya fumigata), this protein is Methylthioribose-1-phosphate isomerase (mri1).